We begin with the raw amino-acid sequence, 255 residues long: Small ribosomal subunit protein uS2 (255 aa).

Positions D233 to K255 are disordered.

Belongs to the universal ribosomal protein uS2 family.

The sequence is that of Small ribosomal subunit protein uS2 from Lactococcus lactis subsp. cremoris (strain SK11).